A 206-amino-acid polypeptide reads, in one-letter code: Small ribosomal subunit protein uS4 (206 aa).

The region spanning 96-156 (TRLDNVVYRM…EKSQKQARIK (61 aa)) is the S4 RNA-binding domain.

The protein belongs to the universal ribosomal protein uS4 family. Part of the 30S ribosomal subunit. Contacts protein S5. The interaction surface between S4 and S5 is involved in control of translational fidelity.

Its function is as follows. One of the primary rRNA binding proteins, it binds directly to 16S rRNA where it nucleates assembly of the body of the 30S subunit. Functionally, with S5 and S12 plays an important role in translational accuracy. The polypeptide is Small ribosomal subunit protein uS4 (Shewanella loihica (strain ATCC BAA-1088 / PV-4)).